We begin with the raw amino-acid sequence, 1722 residues long: Lymphocyte antigen 75 (1722 aa).

Residues 1 to 27 (MGTRRVTPGCAAGLLVLLLRCFGLAEP) form the signal peptide. The Extracellular portion of the chain corresponds to 28 to 1666 (SEFSGDDSFT…VVCKVPLSPD (1639 aa)). Positions 32-182 (GDDSFTIVNE…FLVGETWHHD (151 aa)) constitute a Ricin B-type lectin domain. Asn135 carries N-linked (GlcNAc...) asparagine glycosylation. In terms of domain architecture, Fibronectin type-II spans 164 to 211 (SYGRPCEFPFLVGETWHHDCIRDENHSGPWCATTLNYEYDQKWGICLK). Intrachain disulfides connect Cys169/Cys194, Cys183/Cys209, Cys247/Cys340, and Cys317/Cys332. Residues 225–341 (QIGSCYQFNN…CEAQQPYVCK (117 aa)) form the C-type lectin 1 domain. 2 N-linked (GlcNAc...) asparagine glycosylation sites follow: Asn345 and Asn377. 3 consecutive C-type lectin domains span residues 368–486 (QNGF…YVCK), 493–625 (NDTR…ICKK), and 652–791 (SNLS…WVCQ). 2 cysteine pairs are disulfide-bonded: Cys389/Cys485 and Cys462/Cys477. N-linked (GlcNAc...) asparagine glycosylation occurs at Asn529. Intrachain disulfides connect Cys597–Cys614, Cys678–Cys790, and Cys752–Cys782. Asn843 and Asn865 each carry an N-linked (GlcNAc...) asparagine glycan. Tyr933 is modified (phosphotyrosine). 2 N-linked (GlcNAc...) asparagine glycosylation sites follow: Asn934 and Asn1076. C-type lectin domains lie at 958–1091 (FQNK…LCQK) and 1110–1222 (YLNN…ICYY). 2 disulfides stabilise this stretch: Cys1060–Cys1080 and Cys1197–Cys1211. 3 N-linked (GlcNAc...) asparagine glycosylation sites follow: Asn1225, Asn1320, and Asn1392. The C-type lectin 7 domain occupies 1251–1374 (FQNSCYNFMI…VIDETLHFYQ (124 aa)). C-type lectin domains are found at residues 1401–1513 (YEDG…ICYK) and 1542–1661 (YGDH…VCKV). Residues Cys1488 and Cys1502 are joined by a disulfide bond. N-linked (GlcNAc...) asparagine glycans are attached at residues Asn1593 and Asn1626. Residues Cys1635 and Cys1650 are joined by a disulfide bond. A helical transmembrane segment spans residues 1667 to 1691 (YRGIAVLFAVLSVLALISGLIWFLV). Over 1692-1722 (QRNHFRWTGLSSVRYEHGANEDEVMLPSFHD) the chain is Cytoplasmic. Phosphoserine is present on residues Ser1703 and Ser1719.

As to expression, expressed in the thymus and cultured bone marrow cells.

It localises to the membrane. Acts as an endocytic receptor to direct captured antigens from the extracellular space to a specialized antigen-processing compartment. Causes reduced proliferation of B lymphocytes. This Mesocricetus auratus (Golden hamster) protein is Lymphocyte antigen 75 (LY75).